We begin with the raw amino-acid sequence, 334 residues long: Dihydroorotate dehydrogenase (quinone) (334 aa).

FMN contacts are provided by residues 59 to 63 (AGLDK) and T83. K63 contacts substrate. Position 108–112 (108–112 (NRMGF)) interacts with substrate. FMN is bound by residues N136 and N169. N169 lines the substrate pocket. S172 (nucleophile) is an active-site residue. N174 is a binding site for substrate. Residues K214 and T242 each coordinate FMN. 243–244 (NT) contributes to the substrate binding site. Residues G265, G294, and 315 to 316 (YS) each bind FMN.

Belongs to the dihydroorotate dehydrogenase family. Type 2 subfamily. As to quaternary structure, monomer. Requires FMN as cofactor.

The protein resides in the cell membrane. The enzyme catalyses (S)-dihydroorotate + a quinone = orotate + a quinol. It participates in pyrimidine metabolism; UMP biosynthesis via de novo pathway; orotate from (S)-dihydroorotate (quinone route): step 1/1. Catalyzes the conversion of dihydroorotate to orotate with quinone as electron acceptor. This chain is Dihydroorotate dehydrogenase (quinone), found in Acinetobacter baumannii (strain SDF).